Here is a 220-residue protein sequence, read N- to C-terminus: MELGLGGLSTLSHCPWPRQQPALWPTLAALALLSSVAEASLGSAPRSPAPREGPPPVLASPAGHLPGGRTARWCSGRARRPPPQPSRPAPPPPAPPSALPRGGRAARAGGPGSRARAAGARGCRLRSQLVPVRALGLGHRSDELVRFRFCSGSCRRARSPHDLSLASLLGAGALRPPPGSRPVSQPCCRPTRYEAVSFMDVNSTWRTVDRLSATACGCLG.

An N-terminal signal peptide occupies residues 1 to 39; it reads MELGLGGLSTLSHCPWPRQQPALWPTLAALALLSSVAEA. A propeptide spanning residues 40-107 is cleaved from the precursor; that stretch reads SLGSAPRSPA…ALPRGGRAAR (68 aa). A disordered region spans residues 41–121; it reads LGSAPRSPAP…GSRARAAGAR (81 aa). 2 stretches are compositionally biased toward pro residues: residues 47 to 58 and 81 to 98; these read SPAPREGPPPVL and PPPQ…PPSA. The span at 99-121 shows a compositional bias: low complexity; sequence LPRGGRAARAGGPGSRARAAGAR. 3 cysteine pairs are disulfide-bonded: C123-C188, C150-C216, and C154-C218. A glycan (N-linked (GlcNAc...) asparagine) is linked at N202.

It belongs to the TGF-beta family. GDNF subfamily. As to quaternary structure, homodimer; disulfide-linked. Interacts with GFRA3 coreceptor and RET: forms a 2:2:2 ternary complex composed of ARTN ligand, GFRA3 and RET receptor. Ubiquitous. Expressed at high levels in peripheral tissues including prostate, placenta, pancreas, heart, kidney, pituitary gland, lung and testis. Expressed at low levels in the brain.

Its subcellular location is the secreted. Its function is as follows. Growth factor that supports the survival of sensory and sympathetic peripheral neurons in culture and also supports the survival of dopaminergic neurons of the ventral mid-brain. Acts by binding to its coreceptor, GFRA3, leading to autophosphorylation and activation of the RET receptor. Strong attractant of gut hematopoietic cells thus promoting the formation Peyer's patch-like structures, a major component of the gut-associated lymphoid tissue. In Homo sapiens (Human), this protein is Artemin.